A 188-amino-acid polypeptide reads, in one-letter code: Small ribosomal subunit protein uS7 (188 aa).

It belongs to the universal ribosomal protein uS7 family. As to quaternary structure, part of the 30S ribosomal subunit.

Its function is as follows. One of the primary rRNA binding proteins, it binds directly to 16S rRNA where it nucleates assembly of the head domain of the 30S subunit. Is located at the subunit interface close to the decoding center. The sequence is that of Small ribosomal subunit protein uS7 from Methanococcus maripaludis (strain C6 / ATCC BAA-1332).